The sequence spans 237 residues: Protein XpsM (237 aa).

The segment at 1–21 (MPAATWTASPSPPNWPVPMPR) is disordered. Pro residues predominate over residues 10-21 (PSPPNWPVPMPR).

The sequence is that of Protein XpsM (xpsM) from Xanthomonas campestris pv. campestris (strain ATCC 33913 / DSM 3586 / NCPPB 528 / LMG 568 / P 25).